Consider the following 495-residue polypeptide: Cysteine-rich secretory protein LCCL domain-containing 2 (495 aa).

The signal sequence occupies residues 1–22 (MSCLLNNMVLMGLALLVCGVQA). N-linked (GlcNAc...) asparagine glycosylation occurs at Asn27. Positions 60 to 200 (LMLHNKLRGQ…ENAVYLVCNY (141 aa)) constitute an SCP domain. 2 LCCL domains span residues 282–377 (MTQV…SSSF) and 383–486 (TETA…QNGN). Intrachain disulfides connect Cys288-Cys306, Cys310-Cys330, Cys389-Cys411, and Cys415-Cys438.

Binds to heparin, dermatan sulfate and chondroitin sulfate. In terms of tissue distribution, present in kidney renal tubules (at protein level).

It localises to the secreted. Functionally, promotes matrix assembly. This chain is Cysteine-rich secretory protein LCCL domain-containing 2 (Crispld2), found in Mus musculus (Mouse).